Here is a 711-residue protein sequence, read N- to C-terminus: Ribosomal RNA large subunit methyltransferase K/L (711 aa).

Residues leucine 43–phenylalanine 154 enclose the THUMP domain.

This sequence belongs to the methyltransferase superfamily. RlmKL family.

It is found in the cytoplasm. The enzyme catalyses guanosine(2445) in 23S rRNA + S-adenosyl-L-methionine = N(2)-methylguanosine(2445) in 23S rRNA + S-adenosyl-L-homocysteine + H(+). The catalysed reaction is guanosine(2069) in 23S rRNA + S-adenosyl-L-methionine = N(2)-methylguanosine(2069) in 23S rRNA + S-adenosyl-L-homocysteine + H(+). Specifically methylates the guanine in position 2445 (m2G2445) and the guanine in position 2069 (m7G2069) of 23S rRNA. In Shewanella pealeana (strain ATCC 700345 / ANG-SQ1), this protein is Ribosomal RNA large subunit methyltransferase K/L.